The following is a 98-amino-acid chain: Large ribosomal subunit protein uL23 (98 aa).

It belongs to the universal ribosomal protein uL23 family. Part of the 50S ribosomal subunit. Contacts protein L29, and trigger factor when it is bound to the ribosome.

One of the early assembly proteins it binds 23S rRNA. One of the proteins that surrounds the polypeptide exit tunnel on the outside of the ribosome. Forms the main docking site for trigger factor binding to the ribosome. In Cereibacter sphaeroides (strain ATCC 17025 / ATH 2.4.3) (Rhodobacter sphaeroides), this protein is Large ribosomal subunit protein uL23.